The sequence spans 500 residues: Endothelial lipase (500 aa).

An N-terminal signal peptide occupies residues methionine 1–glycine 20. A disulfide bridge links cysteine 64 with cysteine 77. 2 N-linked (GlcNAc...) asparagine glycosylation sites follow: asparagine 80 and asparagine 136. Serine 169 functions as the Nucleophile in the catalytic mechanism. Aspartate 193 functions as the Charge relay system in the catalytic mechanism. A disulfide bridge connects residues cysteine 252 and cysteine 272. Histidine 274 acts as the Charge relay system in catalysis. Intrachain disulfides connect cysteine 297–cysteine 316 and cysteine 308–cysteine 311. Lysine 325 to lysine 337 is a heparin binding site. The region spanning tyrosine 347–lysine 482 is the PLAT domain. Residues asparagine 393, asparagine 469, and asparagine 491 are each glycosylated (N-linked (GlcNAc...) asparagine). Cysteine 463 and cysteine 483 are oxidised to a cystine.

This sequence belongs to the AB hydrolase superfamily. Lipase family. In terms of assembly, head to tail homodimer. In terms of tissue distribution, high level of expression in the liver, placenta, lung, thyroid, kidney, testis and in the corpus luteum of the ovary. Expressed also in coronary artery endothelial cells, umbilical vein endothelial cells and in hepatocytes and osteosarcoma cell lines. Not detected in heart, brain and muscle.

It localises to the secreted. It carries out the reaction a triacylglycerol + H2O = a diacylglycerol + a fatty acid + H(+). The catalysed reaction is a 1,2-diacyl-sn-glycero-3-phosphocholine + H2O = a 2-acyl-sn-glycero-3-phosphocholine + a fatty acid + H(+). The enzyme catalyses 1,2,3-tri-(9Z-octadecenoyl)-glycerol + H2O = di-(9Z)-octadecenoylglycerol + (9Z)-octadecenoate + H(+). It catalyses the reaction 1,2,3-tributanoylglycerol + H2O = dibutanoylglycerol + butanoate + H(+). It carries out the reaction 1,2-dihexadecanoyl-sn-glycero-3-phosphocholine + H2O = hexadecanoyl-sn-glycero-3-phosphocholine + hexadecanoate + H(+). With respect to regulation, inhibited by serum and NaCl. Its function is as follows. Exerts both phospholipase and triglyceride lipase activities. More active as a phospholipase than a triglyceride lipase. Hydrolyzes triglycerides, both with short-chain fatty acyl groups (tributyrin) and long-chain fatty acyl groups (triolein) with similar levels of activity toward both types of substrates. Hydrolyzes high density lipoproteins (HDL) more efficiently than other lipoproteins. In Homo sapiens (Human), this protein is Endothelial lipase (LIPG).